The primary structure comprises 747 residues: Fibroblast growth factor receptor (747 aa).

A signal peptide spans 1 to 24 (MIQLQNTFIFIALTIFTSASTTSL). Over 25 to 288 (KNETKPLNTI…TEEIPQDTHY (264 aa)) the chain is Extracellular. N26, N42, and N63 each carry an N-linked (GlcNAc...) asparagine glycan. The tract at residues 47-68 (EEDLFDTNGAPKSDTVNASTTT) is disordered. Ig-like C2-type domains lie at 74–167 (PRWV…YELD) and 175–267 (PPVL…AWLT). C99 and C151 are disulfide-bonded. Residues N161, N185, N217, N227, and N240 are each glycosylated (N-linked (GlcNAc...) asparagine). A disulfide bridge connects residues C198 and C251. The helical transmembrane segment at 289–309 (LIYIFGVVCFIILLAFIVYMC) threads the bilayer. Topologically, residues 310–747 (NSRYQNKDPP…NGHARMQSDV (438 aa)) are cytoplasmic. The 284-residue stretch at 377-660 (ILLHERIDEG…QLVEDLDRML (284 aa)) folds into the Protein kinase domain. ATP is bound by residues 383 to 391 (IDEGFFGQV) and K412. The Proton acceptor role is filled by D525. Position 556 is a phosphotyrosine; by autocatalysis (Y556). Positions 679 to 731 (YLPSDVDSNEDTESRDSANATGEDSDSVFEPIDGHGAHAYEVDEAGPLLNPQP) are disordered. The span at 710 to 719 (IDGHGAHAYE) shows a compositional bias: basic and acidic residues.

It belongs to the protein kinase superfamily. Tyr protein kinase family. Fibroblast growth factor receptor subfamily.

The protein resides in the membrane. It catalyses the reaction L-tyrosyl-[protein] + ATP = O-phospho-L-tyrosyl-[protein] + ADP + H(+). Receptor for basic fibroblast growth factor. The sequence is that of Fibroblast growth factor receptor (FGFR) from Ciona intestinalis (Transparent sea squirt).